Reading from the N-terminus, the 240-residue chain is Probable hydroxyacylglutathione hydrolase (240 aa).

Residues His33, His35, Asp37, His38, His95, and Asp119 each contribute to the Zn(2+) site. Substrate contacts are provided by residues Arg128, 158–160 (HEY), and 234–237 (REEK). Residue His158 participates in Zn(2+) binding.

It belongs to the metallo-beta-lactamase superfamily. Glyoxalase II family. Zn(2+) serves as cofactor.

The catalysed reaction is an S-(2-hydroxyacyl)glutathione + H2O = a 2-hydroxy carboxylate + glutathione + H(+). It participates in secondary metabolite metabolism; methylglyoxal degradation; (R)-lactate from methylglyoxal: step 2/2. Functionally, thiolesterase that catalyzes the hydrolysis of S-D-lactoyl-glutathione to form glutathione and D-lactic acid. The sequence is that of Probable hydroxyacylglutathione hydrolase from Schistosoma mansoni (Blood fluke).